The following is a 103-amino-acid chain: Acylphosphatase-2 (103 aa).

S2 bears the N-acetylserine mark. The region spanning 13–103 is the Acylphosphatase-like domain; sequence SVDYEVFGRV…LDFSGFSTRY (91 aa). Active-site residues include R28 and N46.

The protein belongs to the acylphosphatase family.

It catalyses the reaction an acyl phosphate + H2O = a carboxylate + phosphate + H(+). Functionally, its physiological role is not yet clear. This chain is Acylphosphatase-2 (ACYP2), found in Gallus gallus (Chicken).